The chain runs to 627 residues: Mitochondrial distribution and morphology protein 34 (627 aa).

Residues 1–195 form the SMP-LTD domain; it reads MAFNFNWSPL…LPAIIHRLSL (195 aa). 4 disordered regions span residues 209-230, 332-470, 486-557, and 586-627; these read SAQV…NPPQ, ASLA…RTSP, LQRQ…SRPS, and RIQD…AYRH. Composition is skewed to low complexity over residues 215-225 and 332-341; these read PSLDGPGLDPL and ASLASSSHSR. The segment covering 360 to 372 has biased composition (basic residues); the sequence is RHSKAHARKRKKR. Residues 373–384 are compositionally biased toward basic and acidic residues; that stretch reads VVDLRRRPKSAD. Positions 390 to 412 are enriched in low complexity; sequence SGESAYTETSTTTSAVSVFSGST. The span at 436–451 shows a compositional bias: basic and acidic residues; the sequence is TLRDRIAARDDAERNS. Residues 528 to 557 are compositionally biased toward low complexity; the sequence is PNASNNYTSSSSPSARDPQQQQPQQLSRPS.

The protein belongs to the MDM34 family. As to quaternary structure, component of the ER-mitochondria encounter structure (ERMES) or MDM complex, composed of MMM1, MDM10, MDM12 and MDM34.

The protein resides in the mitochondrion outer membrane. Functionally, component of the ERMES/MDM complex, which serves as a molecular tether to connect the endoplasmic reticulum (ER) and mitochondria. Components of this complex are involved in the control of mitochondrial shape and protein biogenesis, and function in nonvesicular lipid trafficking between the ER and mitochondria. MDM34 is required for the interaction of the ER-resident membrane protein MMM1 and the outer mitochondrial membrane-resident beta-barrel protein MDM10. The protein is Mitochondrial distribution and morphology protein 34 of Blastomyces gilchristii (strain SLH14081) (Blastomyces dermatitidis).